Consider the following 463-residue polypeptide: ATP synthase subunit beta (463 aa).

152 to 159 (GGAGVGKT) contributes to the ATP binding site.

The protein belongs to the ATPase alpha/beta chains family. F-type ATPases have 2 components, CF(1) - the catalytic core - and CF(0) - the membrane proton channel. CF(1) has five subunits: alpha(3), beta(3), gamma(1), delta(1), epsilon(1). CF(0) has three main subunits: a(1), b(2) and c(9-12). The alpha and beta chains form an alternating ring which encloses part of the gamma chain. CF(1) is attached to CF(0) by a central stalk formed by the gamma and epsilon chains, while a peripheral stalk is formed by the delta and b chains.

It localises to the cell inner membrane. The catalysed reaction is ATP + H2O + 4 H(+)(in) = ADP + phosphate + 5 H(+)(out). Produces ATP from ADP in the presence of a proton gradient across the membrane. The catalytic sites are hosted primarily by the beta subunits. The protein is ATP synthase subunit beta of Shewanella sp. (strain MR-7).